The following is a 257-amino-acid chain: UPF0246 protein ECA3888 (257 aa).

This sequence belongs to the UPF0246 family.

This Pectobacterium atrosepticum (strain SCRI 1043 / ATCC BAA-672) (Erwinia carotovora subsp. atroseptica) protein is UPF0246 protein ECA3888.